The following is a 390-amino-acid chain: Probable NADH-dependent butanol dehydrogenase 2 (390 aa).

This sequence belongs to the iron-containing alcohol dehydrogenase family.

Its pathway is alcohol metabolism; butanol biosynthesis. This is Probable NADH-dependent butanol dehydrogenase 2 (yugK) from Bacillus subtilis (strain 168).